The sequence spans 275 residues: MFKKSKYFTVRPETKREIPEGLWIKCQCGAILFAKDLERNLKVCQKCAHHFRLTARERIRITLDTEDFEELDAGLAPRDLLGFPGYAERLAANQKQTGLNEAAISAEGTIGGHRVVLVVMDSHFIMGSMGTVVGEKVARAAEHAVRNRLPLIVFSASGGARMQEGILSLMQMAKTAAAIGRLDSAGLLYVSVLTDPTMGGVSASFAFLGDIILAEPGALIGFAGPRVIEQTIRQKLPDGFQQAEFLQEHGFVDAVVPRSRLKDTLIKIIGMHQAG.

The 255-residue stretch at 21 to 275 folds into the CoA carboxyltransferase N-terminal domain; it reads GLWIKCQCGA…IKIIGMHQAG (255 aa). Zn(2+)-binding residues include cysteine 26, cysteine 28, cysteine 44, and cysteine 47. The C4-type zinc-finger motif lies at 26–47; the sequence is CQCGAILFAKDLERNLKVCQKC.

This sequence belongs to the AccD/PCCB family. In terms of assembly, acetyl-CoA carboxylase is a heterohexamer composed of biotin carboxyl carrier protein (AccB), biotin carboxylase (AccC) and two subunits each of ACCase subunit alpha (AccA) and ACCase subunit beta (AccD). The cofactor is Zn(2+).

Its subcellular location is the cytoplasm. It catalyses the reaction N(6)-carboxybiotinyl-L-lysyl-[protein] + acetyl-CoA = N(6)-biotinyl-L-lysyl-[protein] + malonyl-CoA. It participates in lipid metabolism; malonyl-CoA biosynthesis; malonyl-CoA from acetyl-CoA: step 1/1. Its function is as follows. Component of the acetyl coenzyme A carboxylase (ACC) complex. Biotin carboxylase (BC) catalyzes the carboxylation of biotin on its carrier protein (BCCP) and then the CO(2) group is transferred by the transcarboxylase to acetyl-CoA to form malonyl-CoA. The chain is Acetyl-coenzyme A carboxylase carboxyl transferase subunit beta from Desulforudis audaxviator (strain MP104C).